The primary structure comprises 498 residues: Germ cell-less protein-like 2 (498 aa).

The Nuclear localization signal signature appears at 33–39 (SRKRKRN). The region spanning 90-160 (SDIKIRALGR…LYTDADLSIT (71 aa)) is the BTB domain.

In terms of assembly, interacts with CUL3.

It is found in the nucleus matrix. It functions in the pathway protein modification; protein ubiquitination. Its function is as follows. Possible function in spermatogenesis. Probable substrate-specific adapter of an E3 ubiquitin-protein ligase complex which mediates the ubiquitination and subsequent proteasomal degradation of target proteins. In Mus musculus (Mouse), this protein is Germ cell-less protein-like 2 (Gmcl2).